The primary structure comprises 332 residues: Homoarginine-6-hydroxylase 2-ODD-C23.1 (332 aa).

One can recognise a Fe2OG dioxygenase domain in the interval 182 to 287 (PFWVMRLIGY…RVCVAFFYET (106 aa)). Residues H210, D212, and H268 each contribute to the Fe cation site. R278 is a binding site for 2-oxoglutarate.

The protein belongs to the iron/ascorbate-dependent oxidoreductase family. It depends on Fe(2+) as a cofactor.

The protein resides in the cytoplasm. The protein localises to the cytosol. It carries out the reaction L-homoarginine + 2-oxoglutarate + O2 = 6-hydroxy-L-homoarginine + succinate + CO2. Slightly inhibited by canavanine (Can), the 5-oxa-analog of arginine. Functionally, 2-oxoglutarate-dependent dioxygenase catalyzing homoarginine 6-hydroxylation thus producing 6-hydroxy-L-homoarginine. Guanidine (Gd) is in turn synthesized by the spontaneous conversion of 6-hydroxy-L-homoarginine to (S)-2-amino-6-oxohexanoate (RHEA:79843); guanidine is a nitrogen-rich compound that can serve as a defense or signaling substance. This Arabidopsis thaliana (Mouse-ear cress) protein is Homoarginine-6-hydroxylase 2-ODD-C23.1.